A 274-amino-acid chain; its full sequence is 2,3,4,5-tetrahydropyridine-2,6-dicarboxylate N-succinyltransferase (274 aa).

R104 and D141 together coordinate substrate.

Belongs to the transferase hexapeptide repeat family. In terms of assembly, homotrimer.

It is found in the cytoplasm. The enzyme catalyses (S)-2,3,4,5-tetrahydrodipicolinate + succinyl-CoA + H2O = (S)-2-succinylamino-6-oxoheptanedioate + CoA. Its pathway is amino-acid biosynthesis; L-lysine biosynthesis via DAP pathway; LL-2,6-diaminopimelate from (S)-tetrahydrodipicolinate (succinylase route): step 1/3. This is 2,3,4,5-tetrahydropyridine-2,6-dicarboxylate N-succinyltransferase from Enterobacter sp. (strain 638).